The primary structure comprises 645 residues: Chaperone protein DnaK (645 aa).

Position 201 is a phosphothreonine; by autocatalysis (T201). Residues 606–629 (NTNNATAGDNNTTDTGSSSNSDGS) show a composition bias toward low complexity. The tract at residues 606–645 (NTNNATAGDNNTTDTGSSSNSDGSKVVDSDYQEIDKKDGK) is disordered. The segment covering 630–645 (KVVDSDYQEIDKKDGK) has biased composition (basic and acidic residues).

Belongs to the heat shock protein 70 family.

Functionally, acts as a chaperone. The sequence is that of Chaperone protein DnaK from Ehrlichia ruminantium (strain Welgevonden).